The sequence spans 683 residues: 1,4-alpha-glucan-branching enzyme (683 aa).

W92 and K127 together coordinate (1,4-alpha-D-glucosyl)n. The active-site Nucleophile is D342. Residue E397 is the Proton donor of the active site.

Belongs to the glycosyl hydrolase 13 family. GlgB subfamily.

Its subcellular location is the cytoplasm. The enzyme catalyses Transfers a segment of a (1-&gt;4)-alpha-D-glucan chain to a primary hydroxy group in a similar glucan chain.. Its pathway is glycan biosynthesis; glycogen biosynthesis. In terms of biological role, glycogen-branching enzyme participates in the glycogen biosynthetic process along with glycogenin and glycogen synthase. Generates alpha-1,6-glucosidic branches from alpha-1,4-linked glucose chains, to increase solubility of the glycogen polymer. The protein is 1,4-alpha-glucan-branching enzyme (GLC3) of Rhizophagus irregularis (strain DAOM 181602 / DAOM 197198 / MUCL 43194) (Arbuscular mycorrhizal fungus).